The sequence spans 480 residues: Glycogen synthase (480 aa).

Lys-15 contributes to the ADP-alpha-D-glucose binding site.

The protein belongs to the glycosyltransferase 1 family. Bacterial/plant glycogen synthase subfamily.

The enzyme catalyses [(1-&gt;4)-alpha-D-glucosyl](n) + ADP-alpha-D-glucose = [(1-&gt;4)-alpha-D-glucosyl](n+1) + ADP + H(+). The protein operates within glycan biosynthesis; glycogen biosynthesis. In terms of biological role, synthesizes alpha-1,4-glucan chains using ADP-glucose. This is Glycogen synthase from Opitutus terrae (strain DSM 11246 / JCM 15787 / PB90-1).